Here is a 126-residue protein sequence, read N- to C-terminus: MNNLGRHILAEIYGCDELILNDKEYIERIMVDSALKSGAEVREVAFHKFSPQGVSGVVIISESHLTIHTWPELGYAAVDVFTCGDRVNPWDACNYMGEKLNAKNITATEVKRGIFEQPVAVKASNE.

S63 functions as the Schiff-base intermediate with substrate; via pyruvic acid in the catalytic mechanism. S63 carries the post-translational modification Pyruvic acid (Ser); by autocatalysis. The active-site Proton acceptor; for processing activity is the H68. C83 (proton donor; for catalytic activity) is an active-site residue.

It belongs to the prokaryotic AdoMetDC family. Type 1 subfamily. As to quaternary structure, heterotetramer of two alpha and two beta chains arranged as a dimer of alpha/beta heterodimers. Requires pyruvate as cofactor. Is synthesized initially as an inactive proenzyme. Formation of the active enzyme involves a self-maturation process in which the active site pyruvoyl group is generated from an internal serine residue via an autocatalytic post-translational modification. Two non-identical subunits are generated from the proenzyme in this reaction, and the pyruvate is formed at the N-terminus of the alpha chain, which is derived from the carboxyl end of the proenzyme. The post-translation cleavage follows an unusual pathway, termed non-hydrolytic serinolysis, in which the side chain hydroxyl group of the serine supplies its oxygen atom to form the C-terminus of the beta chain, while the remainder of the serine residue undergoes an oxidative deamination to produce ammonia and the pyruvoyl group blocking the N-terminus of the alpha chain.

It carries out the reaction S-adenosyl-L-methionine + H(+) = S-adenosyl 3-(methylsulfanyl)propylamine + CO2. The protein operates within amine and polyamine biosynthesis; S-adenosylmethioninamine biosynthesis; S-adenosylmethioninamine from S-adenosyl-L-methionine: step 1/1. Catalyzes the decarboxylation of S-adenosylmethionine to S-adenosylmethioninamine (dcAdoMet), the propylamine donor required for the synthesis of the polyamines spermine and spermidine from the diamine putrescine. The chain is S-adenosylmethionine decarboxylase proenzyme from Clostridium tetani (strain Massachusetts / E88).